The chain runs to 187 residues: Ubiquinone biosynthesis protein COQ4 homolog, mitochondrial (187 aa).

Zn(2+)-binding residues include His77, Asp78, His81, and Glu93.

It belongs to the COQ4 family. In terms of assembly, component of a multi-subunit COQ enzyme complex. Requires Zn(2+) as cofactor.

It localises to the mitochondrion inner membrane. The enzyme catalyses a 4-hydroxy-3-methoxy-5-(all-trans-polyprenyl)benzoate + H(+) = a 2-methoxy-6-(all-trans-polyprenyl)phenol + CO2. Its pathway is cofactor biosynthesis; ubiquinone biosynthesis. Lyase that catalyzes the C1-decarboxylation of 4-hydroxy-3-methoxy-5-(all-trans-polyprenyl)benzoic acid into 2-methoxy-6-(all-trans-polyprenyl)phenol during ubiquinone biosynthesis. This chain is Ubiquinone biosynthesis protein COQ4 homolog, mitochondrial, found in Leishmania major.